Here is a 132-residue protein sequence, read N- to C-terminus: Small ribosomal subunit protein uS8 (132 aa).

It belongs to the universal ribosomal protein uS8 family. In terms of assembly, part of the 30S ribosomal subunit. Contacts proteins S5 and S12.

One of the primary rRNA binding proteins, it binds directly to 16S rRNA central domain where it helps coordinate assembly of the platform of the 30S subunit. The protein is Small ribosomal subunit protein uS8 of Macrococcus caseolyticus (strain JCSC5402) (Macrococcoides caseolyticum).